The sequence spans 209 residues: Large ribosomal subunit protein uL3 (209 aa).

Glutamine 150 is modified (N5-methylglutamine).

It belongs to the universal ribosomal protein uL3 family. Part of the 50S ribosomal subunit. Forms a cluster with proteins L14 and L19. Post-translationally, methylated by PrmB.

In terms of biological role, one of the primary rRNA binding proteins, it binds directly near the 3'-end of the 23S rRNA, where it nucleates assembly of the 50S subunit. The protein is Large ribosomal subunit protein uL3 of Citrobacter koseri (strain ATCC BAA-895 / CDC 4225-83 / SGSC4696).